Here is a 304-residue protein sequence, read N- to C-terminus: Probable intron-encoded endonuclease 1 (304 aa).

The GIY-YIG domain occupies D84–F175.

The protein to endonucleases of group I introns of fungi and phage.

It localises to the mitochondrion. Mitochondrial DNA endonuclease involved in intron homing. In Neurospora crassa (strain ATCC 24698 / 74-OR23-1A / CBS 708.71 / DSM 1257 / FGSC 987), this protein is Probable intron-encoded endonuclease 1.